Reading from the N-terminus, the 161-residue chain is Large ribosomal subunit protein uL11 (161 aa).

The protein belongs to the universal ribosomal protein uL11 family. Part of the ribosomal stalk of the 50S ribosomal subunit. Interacts with L10 and the large rRNA to form the base of the stalk. L10 forms an elongated spine to which L12 dimers bind in a sequential fashion forming a multimeric L10(L12)X complex.

Forms part of the ribosomal stalk which helps the ribosome interact with GTP-bound translation factors. This chain is Large ribosomal subunit protein uL11, found in Methanosarcina barkeri (strain Fusaro / DSM 804).